The primary structure comprises 110 residues: Large ribosomal subunit protein uL22 (110 aa).

This sequence belongs to the universal ribosomal protein uL22 family. Part of the 50S ribosomal subunit.

This protein binds specifically to 23S rRNA; its binding is stimulated by other ribosomal proteins, e.g. L4, L17, and L20. It is important during the early stages of 50S assembly. It makes multiple contacts with different domains of the 23S rRNA in the assembled 50S subunit and ribosome. Functionally, the globular domain of the protein is located near the polypeptide exit tunnel on the outside of the subunit, while an extended beta-hairpin is found that lines the wall of the exit tunnel in the center of the 70S ribosome. The chain is Large ribosomal subunit protein uL22 from Pseudoalteromonas atlantica (strain T6c / ATCC BAA-1087).